The chain runs to 127 residues: Single-stranded DNA-binding protein 2 (127 aa).

The SSB domain occupies 4-103; that stretch reads INKVMLVGRC…ITINTIELLG (100 aa). The tract at residues 104–127 is disordered; that stretch reads SPRKEESTSTSAPNETQAVANANF. The span at 111 to 127 shows a compositional bias: polar residues; it reads TSTSAPNETQAVANANF.

As to quaternary structure, homotetramer.

The sequence is that of Single-stranded DNA-binding protein 2 (ssb2) from Nostoc sp. (strain PCC 7120 / SAG 25.82 / UTEX 2576).